The chain runs to 338 residues: tRNA-specific 2-thiouridylase MnmA (338 aa).

ATP-binding positions include 6–13 and methionine 32; that span reads ALSGGVDS. The active-site Nucleophile is the cysteine 92. A disulfide bond links cysteine 92 and cysteine 186. An ATP-binding site is contributed by glycine 116. The segment at 134-136 is interaction with tRNA; that stretch reads KDQ. The active-site Cysteine persulfide intermediate is cysteine 186. The interaction with tRNA stretch occupies residues 288–289; it reads RY.

It belongs to the MnmA/TRMU family.

Its subcellular location is the cytoplasm. The enzyme catalyses S-sulfanyl-L-cysteinyl-[protein] + uridine(34) in tRNA + AH2 + ATP = 2-thiouridine(34) in tRNA + L-cysteinyl-[protein] + A + AMP + diphosphate + H(+). Its function is as follows. Catalyzes the 2-thiolation of uridine at the wobble position (U34) of tRNA, leading to the formation of s(2)U34. This is tRNA-specific 2-thiouridylase MnmA from Campylobacter fetus subsp. fetus (strain 82-40).